The chain runs to 316 residues: Acetaldehyde dehydrogenase (316 aa).

Residue 11–14 (SGNI) coordinates NAD(+). Cys-131 (acyl-thioester intermediate) is an active-site residue. NAD(+) is bound by residues 162-170 (SAGPGTRAN) and Asn-289.

The protein belongs to the acetaldehyde dehydrogenase family. As to quaternary structure, interacts with MhpE.

It carries out the reaction acetaldehyde + NAD(+) + CoA = acetyl-CoA + NADH + H(+). It functions in the pathway aromatic compound metabolism; 3-phenylpropanoate degradation. In terms of biological role, catalyzes the conversion of acetaldehyde to acetyl-CoA, using NAD(+) and coenzyme A. Is the final enzyme in the meta-cleavage pathway for the degradation of aromatic compounds. In Klebsiella pneumoniae subsp. pneumoniae (strain ATCC 700721 / MGH 78578), this protein is Acetaldehyde dehydrogenase.